The following is a 457-amino-acid chain: C4-dicarboxylate transport protein (457 aa).

A run of 9 helical transmembrane segments spans residues 22 to 42 (FQVV…PAFA), 55 to 75 (LVKM…IAGM), 90 to 110 (VYFL…AHVV), 138 to 158 (LTLV…AFTG), 168 to 188 (GPNI…LALV), 209 to 229 (LVHI…AFTI), 242 to 262 (WLVG…LGVV), 335 to 357 (LFIA…LAVA), and 376 to 396 (AATL…ILGV).

Belongs to the dicarboxylate/amino acid:cation symporter (DAACS) (TC 2.A.23) family.

It localises to the cell inner membrane. Functionally, responsible for the transport of dicarboxylates such as succinate, fumarate, and malate from the periplasm across the membrane. The protein is C4-dicarboxylate transport protein of Xanthomonas oryzae pv. oryzae (strain MAFF 311018).